Consider the following 288-residue polypeptide: 4-diphosphocytidyl-2-C-methyl-D-erythritol kinase (288 aa).

Residue Lys22 is part of the active site. Position 104–114 (104–114 (PSQAGLGGGSS)) interacts with ATP. Residue Asp146 is part of the active site.

This sequence belongs to the GHMP kinase family. IspE subfamily.

It carries out the reaction 4-CDP-2-C-methyl-D-erythritol + ATP = 4-CDP-2-C-methyl-D-erythritol 2-phosphate + ADP + H(+). The protein operates within isoprenoid biosynthesis; isopentenyl diphosphate biosynthesis via DXP pathway; isopentenyl diphosphate from 1-deoxy-D-xylulose 5-phosphate: step 3/6. Its function is as follows. Catalyzes the phosphorylation of the position 2 hydroxy group of 4-diphosphocytidyl-2C-methyl-D-erythritol. This chain is 4-diphosphocytidyl-2-C-methyl-D-erythritol kinase, found in Protochlamydia amoebophila (strain UWE25).